The primary structure comprises 315 residues: Annexin Gh1 (315 aa).

Annexin repeat units lie at residues 10-81 (PSVS…LWAL), 82-153 (DPAE…PLVS), 165-236 (TLAK…STVK), and 240-311 (YPEK…VLAG). Positions 23, 25, 27, and 67 each coordinate Ca(2+). Positions 253, 255, 257, 295, 297, 298, and 303 each coordinate Ca(2+).

The protein belongs to the annexin family. As to quaternary structure, monomer. Trimer. Oligomerization is calcium-independent. Disassembly of the oligomers seems to be required for calcium-binding.

The protein resides in the membrane. Its function is as follows. Binds to phospholipid vesicles in a calcium-dependent manner in vitro. Prefers phosphatidyl-serine containing membranes. May have a role in the membrane cytoskeleton scaffolding or exocytotic processes. May be involved in oxidative stress response. This chain is Annexin Gh1, found in Gossypium hirsutum (Upland cotton).